Consider the following 178-residue polypeptide: Crossover junction endodeoxyribonuclease RuvC (178 aa).

Catalysis depends on residues D14, E73, and D145. The Mg(2+) site is built by D14, E73, and D145.

It belongs to the RuvC family. Homodimer which binds Holliday junction (HJ) DNA. The HJ becomes 2-fold symmetrical on binding to RuvC with unstacked arms; it has a different conformation from HJ DNA in complex with RuvA. In the full resolvosome a probable DNA-RuvA(4)-RuvB(12)-RuvC(2) complex forms which resolves the HJ. Mg(2+) is required as a cofactor.

Its subcellular location is the cytoplasm. It carries out the reaction Endonucleolytic cleavage at a junction such as a reciprocal single-stranded crossover between two homologous DNA duplexes (Holliday junction).. Functionally, the RuvA-RuvB-RuvC complex processes Holliday junction (HJ) DNA during genetic recombination and DNA repair. Endonuclease that resolves HJ intermediates. Cleaves cruciform DNA by making single-stranded nicks across the HJ at symmetrical positions within the homologous arms, yielding a 5'-phosphate and a 3'-hydroxyl group; requires a central core of homology in the junction. The consensus cleavage sequence is 5'-(A/T)TT(C/G)-3'. Cleavage occurs on the 3'-side of the TT dinucleotide at the point of strand exchange. HJ branch migration catalyzed by RuvA-RuvB allows RuvC to scan DNA until it finds its consensus sequence, where it cleaves and resolves the cruciform DNA. This is Crossover junction endodeoxyribonuclease RuvC from Nitrosomonas eutropha (strain DSM 101675 / C91 / Nm57).